The sequence spans 141 residues: Hemoglobin subunit alpha-1/2 (141 aa).

The Globin domain maps to 1–141 (VLSPADKANV…VGTVLTSKYR (141 aa)). Serine 3 carries the post-translational modification Phosphoserine. N6-succinyllysine occurs at positions 7 and 11. The residue at position 16 (lysine 16) is an N6-acetyllysine; alternate. An N6-succinyllysine; alternate modification is found at lysine 16. The residue at position 24 (tyrosine 24) is a Phosphotyrosine. Residue serine 35 is modified to Phosphoserine. Lysine 40 carries the N6-succinyllysine modification. Serine 49 is modified (phosphoserine). Histidine 58 lines the O2 pocket. Histidine 87 is a binding site for heme b. Serine 102 is modified (phosphoserine). Threonine 108 is modified (phosphothreonine). Serine 124 and serine 131 each carry phosphoserine. Phosphothreonine occurs at positions 134 and 137. Serine 138 is modified (phosphoserine).

Belongs to the globin family. As to quaternary structure, heterotetramer of two alpha chains and two beta chains. In terms of tissue distribution, red blood cells.

Involved in oxygen transport from the lung to the various peripheral tissues. The chain is Hemoglobin subunit alpha-1/2 from Macroderma gigas (Australian ghost bat).